A 578-amino-acid chain; its full sequence is Arginine--tRNA ligase (578 aa).

The short motif at 123-133 is the 'HIGH' region element; sequence PNIAKEMHVGH.

Belongs to the class-I aminoacyl-tRNA synthetase family. As to quaternary structure, monomer.

The protein resides in the cytoplasm. The enzyme catalyses tRNA(Arg) + L-arginine + ATP = L-arginyl-tRNA(Arg) + AMP + diphosphate. In Baumannia cicadellinicola subsp. Homalodisca coagulata, this protein is Arginine--tRNA ligase.